We begin with the raw amino-acid sequence, 644 residues long: Phosphomethylpyrimidine synthase (644 aa).

Residues Asn-236, Met-265, Tyr-294, His-330, 350-352, 391-394, and Glu-430 each bind substrate; these read SRG and DGLR. His-434 lines the Zn(2+) pocket. Tyr-457 contributes to the substrate binding site. Zn(2+) is bound at residue His-498. [4Fe-4S] cluster-binding residues include Cys-578, Cys-581, and Cys-586. Residues 623 to 644 form a disordered region; sequence RQKSEEFKASGSELYHPAVEAE.

Belongs to the ThiC family. Homodimer. Requires [4Fe-4S] cluster as cofactor.

The enzyme catalyses 5-amino-1-(5-phospho-beta-D-ribosyl)imidazole + S-adenosyl-L-methionine = 4-amino-2-methyl-5-(phosphooxymethyl)pyrimidine + CO + 5'-deoxyadenosine + formate + L-methionine + 3 H(+). Its pathway is cofactor biosynthesis; thiamine diphosphate biosynthesis. Catalyzes the synthesis of the hydroxymethylpyrimidine phosphate (HMP-P) moiety of thiamine from aminoimidazole ribotide (AIR) in a radical S-adenosyl-L-methionine (SAM)-dependent reaction. The polypeptide is Phosphomethylpyrimidine synthase (Aliivibrio fischeri (strain MJ11) (Vibrio fischeri)).